A 135-amino-acid chain; its full sequence is ATP synthase epsilon chain (135 aa).

This sequence belongs to the ATPase epsilon chain family. In terms of assembly, F-type ATPases have 2 components, CF(1) - the catalytic core - and CF(0) - the membrane proton channel. CF(1) has five subunits: alpha(3), beta(3), gamma(1), delta(1), epsilon(1). CF(0) has three main subunits: a, b and c.

Its subcellular location is the cell inner membrane. In terms of biological role, produces ATP from ADP in the presence of a proton gradient across the membrane. The protein is ATP synthase epsilon chain of Hyphomonas neptunium (strain ATCC 15444).